The primary structure comprises 78 residues: Antitoxin FitA (78 aa).

Homodimer in the absence of FitB; forms a heterodimer with FitB; 4 FitAB heterodimers form a complex that binds to fitAB promoter DNA. The complex is also seen in solution.

Functionally, antitoxin component of a type II toxin-antitoxin (TA) system. Plays a role in the speed with which bacteria traverse human epithelial cells; disruption of the locus increases the speed of trafficking about 2-4-fold. Binds to its own promoter, binding affinity of the FitAB complex is 20-30-fold higher than FitA alone. No nuclease activity was observed for the FitAB complex, perhaps because FitA (the antitoxin) prevents metal binding and thus catalysis by FitB. The protein is Antitoxin FitA (fitA) of Neisseria gonorrhoeae (strain ATCC 700825 / FA 1090).